We begin with the raw amino-acid sequence, 154 residues long: Hydroperoxy fatty acid reductase Gpx2 (154 aa).

Cysteine 34 is a catalytic residue.

It belongs to the glutathione peroxidase family. Monomer.

The catalysed reaction is a hydroperoxy polyunsaturated fatty acid + NADPH + H(+) = a hydroxy polyunsaturated fatty acid + NADP(+) + H2O. Its activity is regulated as follows. Mercaptosuccinate, pCMB, and nethylmaleimide act as inhibitors of the catalytic activity. In terms of biological role, hydroperoxy fatty acid reductase essential for the removal of lipid hydroperoxides under normal and stress conditions, leading to the protection of membrane integrity. In Synechocystis sp. (strain ATCC 27184 / PCC 6803 / Kazusa), this protein is Hydroperoxy fatty acid reductase Gpx2 (gpx2).